The primary structure comprises 570 residues: Interleukin-1 receptor accessory protein (570 aa).

The N-terminal stretch at 1 to 20 is a signal peptide; that stretch reads MGLLWYLMSLSFYGILQSHA. 3 consecutive Ig-like C2-type domains span residues 21 to 128, 139 to 230, and 243 to 348; these read SERC…VAFP, NSAM…RTVT, and PQIY…AKVK. At 21-367 the chain is on the extracellular side; the sequence is SERCDDWGLD…VELACGFGAT (347 aa). 5 cysteine pairs are disulfide-bonded: Cys-24-Cys-122, Cys-47-Cys-114, Cys-137-Cys-181, Cys-160-Cys-212, and Cys-266-Cys-332. N-linked (GlcNAc...) asparagine glycosylation is present at Asn-57. Residues 69-85 are essential for interaction with PTPRD; that stretch reads IWYWTRQDRDLEEPINF. N-linked (GlcNAc...) asparagine glycosylation is found at Asn-107, Asn-111, and Asn-118. N-linked (GlcNAc...) asparagine glycosylation is found at Asn-196, Asn-209, and Asn-299. A helical membrane pass occupies residues 368–388; it reads VFLVVVLIVVYHVYWLEMVLF. The Cytoplasmic segment spans residues 389-570; it reads YRAHFGTDET…GLSYSSLKNV (182 aa). A TIR domain is found at 403 to 546; it reads KEYDIYVSYA…RFWKQLQVAM (144 aa). Glu-482 is an active-site residue. The segment at 550 to 570 is disordered; that stretch reads KSPRWSSNDKQGLSYSSLKNV. A compositionally biased stretch (polar residues) spans 553–570; that stretch reads RWSSNDKQGLSYSSLKNV.

This sequence belongs to the interleukin-1 receptor family. The interleukin-36 receptor complex is a heterodimer of IL1RL2 and IL1RAP; the association is inhibited by IL36RN. The interleukin-1 receptor complex is a heterodimer of IL1R1 and IL1RAP. Associates with IL1R2 to form a non-signaling interleukin-1 receptor complex. Interacts with IL-33-bound IL1RL1 to form the minimal interleukin-33 signaling complex with a 1:1:1 stoichiometry. Interacts with KIT (independently of stimulation with KITLG/SCF). A mast cell-specific KITLG/SCF-induced interleukin-33 signaling complex contains IL1RL1, IL1RAP, KIT and MYD88. Interacts (via the first immunoglobilin domain) with PTPRD (via the third immunoglobilin domain); induces pre- and postsynaptic differentiation of neurons. As to expression, detected in lung, brain, spleen, thymus and liver. Expressed in brain endothelial cells, astrocytes, microglia and neurons. Isoform 3 is predominantly expressed in brain; expressed in hippocampal neurons.

It localises to the cell membrane. The protein localises to the secreted. The catalysed reaction is NAD(+) + H2O = ADP-D-ribose + nicotinamide + H(+). In terms of biological role, coreceptor for IL1RL2 in the IL-36 signaling system. Coreceptor with IL1R1 in the IL-1 signaling system. Associates with IL1R1 bound to IL1B to form the high affinity interleukin-1 receptor complex which mediates interleukin-1-dependent activation of NF-kappa-B and other pathways. Signaling involves the recruitment of adapter molecules such as TOLLIP, MYD88, and IRAK1 or IRAK2 via the respective TIR domains of the receptor/coreceptor subunits. Recruits TOLLIP to the signaling complex. Does not bind to interleukin-1 alone; binding of IL1RN to IL1R1, prevents its association with IL1R1 to form a signaling complex. The cellular response is modulated through a non-signaling association with the membrane IL1R2 decoy receptor. Secreted forms (isoforms 2 and 3) associate with secreted ligand-bound IL1R2 and increase the affinity of secreted IL1R2 for IL1B; this complex formation may be the dominant mechanism for neutralization of IL1B by secreted/soluble receptors. Coreceptor for IL1RL1 in the IL-33 signaling system. Can bidirectionally induce pre- and postsynaptic differentiation of neurons by trans-synaptically binding to PTPRD. May play a role in IL1B-mediated costimulation of IFNG production from T-helper 1 (Th1) cells. Associates with secreted ligand-bound IL1R2 and increases the affinity of secreted IL1R2 for IL1B; this complex formation may be the dominant mechanism for neutralization of IL1B by secreted/soluble receptors. Enhances the ability of secreted IL1R1 to inhibit IL-33 signaling. Functionally, required for Src phosphorylation by IL1B. Required for IL1B-potentiated NMDA-induced calcium influx in neurons acting in cooperation with IL1R1 isoform 2 to mediate Akt kinase activation. The protein is Interleukin-1 receptor accessory protein (Il1rap) of Mus musculus (Mouse).